Reading from the N-terminus, the 65-residue chain is Sec-independent protein translocase protein TatA (65 aa).

A helical transmembrane segment spans residues 9–29 (ILIIVLLVVVVFGVGKLPQVG). Residues 40–65 (RKASTGEDAKEEVETKEETKPAEKSE) are disordered. The segment covering 43–65 (STGEDAKEEVETKEETKPAEKSE) has biased composition (basic and acidic residues).

Belongs to the TatA/E family. In terms of assembly, forms a complex with TatC.

It localises to the cell membrane. Part of the twin-arginine translocation (Tat) system that transports large folded proteins containing a characteristic twin-arginine motif in their signal peptide across membranes. TatA could form the protein-conducting channel of the Tat system. This Dehalococcoides mccartyi (strain ATCC BAA-2100 / JCM 16839 / KCTC 5957 / BAV1) protein is Sec-independent protein translocase protein TatA.